The primary structure comprises 337 residues: Glucokinase (337 aa).

Ala-11–Thr-16 contacts ATP.

Belongs to the bacterial glucokinase family.

It is found in the cytoplasm. It catalyses the reaction D-glucose + ATP = D-glucose 6-phosphate + ADP + H(+). The protein is Glucokinase of Xylella fastidiosa (strain 9a5c).